Consider the following 164-residue polypeptide: Phosphopantetheine adenylyltransferase (164 aa).

Serine 9 provides a ligand contact to substrate. Residues 9–10 (SF) and histidine 17 each bind ATP. Substrate-binding residues include lysine 41, leucine 73, and lysine 87. ATP contacts are provided by residues 88–90 (GLR), glutamate 98, and 123–129 (YSYLSSS).

It belongs to the bacterial CoaD family. Homohexamer. The cofactor is Mg(2+).

The protein resides in the cytoplasm. The enzyme catalyses (R)-4'-phosphopantetheine + ATP + H(+) = 3'-dephospho-CoA + diphosphate. The protein operates within cofactor biosynthesis; coenzyme A biosynthesis; CoA from (R)-pantothenate: step 4/5. Its function is as follows. Reversibly transfers an adenylyl group from ATP to 4'-phosphopantetheine, yielding dephospho-CoA (dPCoA) and pyrophosphate. The chain is Phosphopantetheine adenylyltransferase from Clostridium botulinum (strain Okra / Type B1).